Reading from the N-terminus, the 99-residue chain is Small ribosomal subunit protein uS19 (99 aa).

Residues 77–99 are disordered; sequence TRTFHGHSGDKKAKVAKGGPGGR.

It belongs to the universal ribosomal protein uS19 family.

Protein S19 forms a complex with S13 that binds strongly to the 16S ribosomal RNA. The protein is Small ribosomal subunit protein uS19 of Sorangium cellulosum (strain So ce56) (Polyangium cellulosum (strain So ce56)).